Consider the following 594-residue polypeptide: Alanine--tRNA ligase (594 aa).

The Zn(2+) site is built by histidine 456, histidine 460, cysteine 558, and histidine 562.

Belongs to the class-II aminoacyl-tRNA synthetase family. Requires Zn(2+) as cofactor.

The protein localises to the cytoplasm. The catalysed reaction is tRNA(Ala) + L-alanine + ATP = L-alanyl-tRNA(Ala) + AMP + diphosphate. Catalyzes the attachment of alanine to tRNA(Ala) in a two-step reaction: alanine is first activated by ATP to form Ala-AMP and then transferred to the acceptor end of tRNA(Ala). Also edits incorrectly charged Ser-tRNA(Ala) and Gly-tRNA(Ala) via its editing domain. This chain is Alanine--tRNA ligase (alaS), found in Borreliella afzelii (strain PKo) (Borrelia afzelii).